Here is a 440-residue protein sequence, read N- to C-terminus: Probable D-serine dehydratase (440 aa).

At Lys111 the chain carries N6-(pyridoxal phosphate)lysine.

The protein belongs to the serine/threonine dehydratase family. DsdA subfamily. Pyridoxal 5'-phosphate is required as a cofactor.

The catalysed reaction is D-serine = pyruvate + NH4(+). The protein is Probable D-serine dehydratase of Rhizobium leguminosarum bv. trifolii (strain WSM2304).